A 113-amino-acid chain; its full sequence is Cytochrome c oxidase subunit 7A2-like, mitochondrial (113 aa).

The N-terminal 54 residues, 1-54 (MYYKFSSFTQKLAGAWASEAYTPQGLKPVSTEAPPIIFATPTKLTSSVTAYDYS), are a transit peptide targeting the mitochondrion. Lys68 is modified (N6-acetyllysine). A helical membrane pass occupies residues 81-106 (PDQMLYRTTMALTLGGTIYCLIALYM).

The protein belongs to the cytochrome c oxidase VIIa family. As to quaternary structure, interacts with the mitochondrial respiratory complexes III (CIII) and IV (CIV), promoting their association.

The protein localises to the mitochondrion inner membrane. It functions in the pathway energy metabolism; oxidative phosphorylation. In terms of biological role, assembly factor that mediates the formation of some mitochondrial respiratory supercomplexes (respirasomes), thereby promoting oxidative phosphorylation and energy metabolism. Acts as a molecular adapter that associates with both mitochondrial respiratory complexes III (CIII) and IV (CIV), promoting their association. Mediates the formation of various mitochondrial respiratory supercomplexes, such as MCIII(2)IV(2), composed of two CIII and two CIV, and the CS-respirasome (MCI(1)III(2)IV(2)), composed of one CI, two CIII and two CIV. Not involved in the formation of the canonical respirasome (MCI(1)III(2)IV(1)), composed of one CI, two CIII and one CIV. The formation of different respirasomes is important for cell adaptation to oxygen conditions and prevent metabolic exhaustion: supercomplexes mediated by COX7A2L/SCAF1 are required to maintain oxidative phosphorylation upon low oxygen conditions and promote metabolic rewiring toward glycolysis. This is Cytochrome c oxidase subunit 7A2-like, mitochondrial from Mus musculus (Mouse).